A 155-amino-acid chain; its full sequence is Ribonuclease H (155 aa).

One can recognise an RNase H type-1 domain in the interval 4 to 146; that stretch reads NIDVVEIYTD…CDRLATEQIK (143 aa). Residues aspartate 13, glutamate 51, aspartate 73, and aspartate 138 each contribute to the Mg(2+) site.

Belongs to the RNase H family. In terms of assembly, monomer. Requires Mg(2+) as cofactor.

The protein resides in the cytoplasm. The enzyme catalyses Endonucleolytic cleavage to 5'-phosphomonoester.. Its function is as follows. Endonuclease that specifically degrades the RNA of RNA-DNA hybrids. This Thermoanaerobacter pseudethanolicus (strain ATCC 33223 / 39E) (Clostridium thermohydrosulfuricum) protein is Ribonuclease H.